The chain runs to 403 residues: Acetylornithine aminotransferase (403 aa).

Pyridoxal 5'-phosphate contacts are provided by residues 107-108 (GA) and F140. N(2)-acetyl-L-ornithine is bound at residue R143. 225 to 228 (DEVQ) provides a ligand contact to pyridoxal 5'-phosphate. N6-(pyridoxal phosphate)lysine is present on K254. Residue S282 participates in N(2)-acetyl-L-ornithine binding. T283 contacts pyridoxal 5'-phosphate.

This sequence belongs to the class-III pyridoxal-phosphate-dependent aminotransferase family. ArgD subfamily. Homodimer. Pyridoxal 5'-phosphate is required as a cofactor.

The protein localises to the cytoplasm. The enzyme catalyses N(2)-acetyl-L-ornithine + 2-oxoglutarate = N-acetyl-L-glutamate 5-semialdehyde + L-glutamate. Its pathway is amino-acid biosynthesis; L-arginine biosynthesis; N(2)-acetyl-L-ornithine from L-glutamate: step 4/4. This Vibrio vulnificus (strain YJ016) protein is Acetylornithine aminotransferase.